The sequence spans 104 residues: MKDHEYHALTDAFFQYVEDTVDAGYPDIDCERAGGVLTLSFENKTKVIINKQEPLHQIWVATRENGFHFELQGETWIDNRFGHELKALLTKACTTQAGESVVFP.

The protein belongs to the frataxin family.

Its function is as follows. Involved in iron-sulfur (Fe-S) cluster assembly. May act as a regulator of Fe-S biogenesis. The chain is Iron-sulfur cluster assembly protein CyaY from Aeromonas salmonicida (strain A449).